We begin with the raw amino-acid sequence, 920 residues long: B3 domain-containing protein REM17 (920 aa).

3 DNA-binding regions (TF-B3) span residues 12–105 (NPHF…LGPS), 153–250 (RFVA…CRAK), and 267–361 (CFEG…LCPT). 3 disordered regions span residues 405–438 (DDDQTNIGNSSRKKRVSKNPREKVESSSDHSSFV), 540–562 (LACSEGNKSEESEEEGTEDKNTS), and 585–614 (DDDQTNIGNSSKEKRVKKNPVKKAESSSDH). The span at 423–432 (NPREKVESSS) shows a compositional bias: basic and acidic residues. Positions 436-531 (SFVGSVNPSS…NKPVLSLCPT (96 aa)) form a DNA-binding region, TF-B3 4. DNA-binding regions (TF-B3) lie at residues 616-714 (SFVA…SLSE) and 727-823 (YFVG…LCPA). Positions 842–852 (NSLSSNPSSGD) are enriched in low complexity. The interval 842–870 (NSLSSNPSSGDDSSRSEESEEENMEDKNI) is disordered.

The protein resides in the nucleus. In Arabidopsis thaliana (Mouse-ear cress), this protein is B3 domain-containing protein REM17 (REM17).